A 681-amino-acid polypeptide reads, in one-letter code: SRSF protein kinase 2 (681 aa).

Residues 1 to 63 (MSVNSEKSSS…EQEDPADYCK (63 aa)) form a disordered region. Positions 22-41 (LVPPPPPPPPPPPLPDPAPP) are enriched in pro residues. The segment covering 42-59 (EPEEEILGSDDEEQEDPA) has biased composition (acidic residues). Position 50 is a phosphoserine (Ser50). The Protein kinase domain occupies 79-681 (YHVIRKLGWG…ECLRHPWLNS (603 aa)). Residues 85–93 (LGWGHFSTV) and Lys108 contribute to the ATP site. The Proton acceptor role is filled by Asp212. Disordered stretches follow at residues 237–270 (WQKA…KKKL), 302–452 (ENIT…PLFS), and 467–499 (GSPL…KTKT). Residues Thr331 and Thr332 each carry the phosphothreonine modification. A Phosphoserine modification is found at Ser378. A compositionally biased stretch (acidic residues) spans 395-419 (QLEDEEDDEDDCANPEEYNLDEPNA). Over residues 421–431 (SDYTYSSSYEQ) the composition is skewed to polar residues. Phosphoserine is present on Ser468. Thr471 is modified (phosphothreonine). Phosphoserine is present on residues Ser477, Ser479, and Ser483. Phosphothreonine; by PKB/AKT1 is present on Thr485. Phosphoserine occurs at positions 487 and 490. The residue at position 581 (Ser581) is a Phosphoserine; by CK2.

Belongs to the protein kinase superfamily. CMGC Ser/Thr protein kinase family. As to quaternary structure, associates with U4/U6-U5 tri-small nuclear ribonucleoproteins (U4/U6-U5 tri-snRNPs). Interacts with PKB/AKT1 in a phosphorylation-dependent manner. The phosphorylated form (by PKB/AKT1) interacts with YWHAB and YWHAE. Interaction with YWHAB suppresses its cleavage by caspases and inhibits the release of its N-terminal pro-apoptotic fragment. Interacts with SFN. Interacts with ACIN1. Interacts with POLR2A/RNA polymerase II; the interaction occurs during the co-transcriptional formation of inappropriate R-loops. Mg(2+) is required as a cofactor. In terms of processing, phosphorylation at Thr-485 by PKB/AKT1 enhances its stimulatory activity in triggering cyclin-D1 (CCND1) expression and promoting apoptosis in neurons, which can be blocked by YWHAB. It also enhances its protein kinase activity toward ACIN1 and SRSF2, promotes its nuclear translocation and prevents its proteolytic cleavage. Post-translationally, proteolytically cleaved at Asp-137 and Asp-401 by caspase-3 during apoptotic cell death. Cleavage at Asp-137 which is the major site of cleavage, produces a small N-terminal fragment that translocates into nucleus and promotes VP16-induced apoptosis. Expressed in testes, lung and brain.

The protein localises to the cytoplasm. Its subcellular location is the nucleus. It localises to the nucleoplasm. It is found in the nucleus speckle. The protein resides in the chromosome. The enzyme catalyses L-seryl-[protein] + ATP = O-phospho-L-seryl-[protein] + ADP + H(+). The catalysed reaction is L-threonyl-[protein] + ATP = O-phospho-L-threonyl-[protein] + ADP + H(+). Its activity is regulated as follows. Activated by phosphorylation on Ser-50 and Ser-581. Serine/arginine-rich protein-specific kinase which specifically phosphorylates its substrates at serine residues located in regions rich in arginine/serine dipeptides, known as RS domains and is involved in the phosphorylation of SR splicing factors and the regulation of splicing. Promotes neuronal apoptosis by up-regulating cyclin-D1 (CCND1) expression. This is done by the phosphorylation of SRSF2, leading to the suppression of p53/TP53 phosphorylation thereby relieving the repressive effect of p53/TP53 on cyclin-D1 (CCND1) expression. Phosphorylates ACIN1, and redistributes it from the nuclear speckles to the nucleoplasm, resulting in cyclin A1 but not cyclin A2 up-regulation. Plays an essential role in spliceosomal B complex formation via the phosphorylation of DDX23/PRP28. Probably by phosphorylating DDX23, leads to the suppression of incorrect R-loops formed during transcription; R-loops are composed of a DNA:RNA hybrid and the associated non-template single-stranded DNA. This is SRSF protein kinase 2 from Mus musculus (Mouse).